A 223-amino-acid polypeptide reads, in one-letter code: Deoxyribose-phosphate aldolase (223 aa).

Catalysis depends on aspartate 89, which acts as the Proton donor/acceptor. Lysine 152 functions as the Schiff-base intermediate with acetaldehyde in the catalytic mechanism. Lysine 181 serves as the catalytic Proton donor/acceptor.

It belongs to the DeoC/FbaB aldolase family. DeoC type 1 subfamily.

It is found in the cytoplasm. It catalyses the reaction 2-deoxy-D-ribose 5-phosphate = D-glyceraldehyde 3-phosphate + acetaldehyde. It functions in the pathway carbohydrate degradation; 2-deoxy-D-ribose 1-phosphate degradation; D-glyceraldehyde 3-phosphate and acetaldehyde from 2-deoxy-alpha-D-ribose 1-phosphate: step 2/2. Its function is as follows. Catalyzes a reversible aldol reaction between acetaldehyde and D-glyceraldehyde 3-phosphate to generate 2-deoxy-D-ribose 5-phosphate. This is Deoxyribose-phosphate aldolase from Bacillus cereus (strain AH187).